An 895-amino-acid chain; its full sequence is DNA double-strand break repair Rad50 ATPase (895 aa).

ATP contacts are provided by residues 32–38 and Gln-137; that span reads NGAGKSS. Residues 183-253 adopt a coiled-coil conformation; it reads SDYDYLKNEL…LNAQLETIKK (71 aa). A Zinc-hook domain is found at 411–507; the sequence is RAEINSSLMQ…ERKHQKKLLD (97 aa). Cys-455 and Cys-458 together coordinate Zn(2+). 2 coiled-coil regions span residues 464 to 510 and 618 to 647; these read TEKS…DRIN and ENSL…AMDE.

Belongs to the SMC family. RAD50 subfamily. Homodimer. Forms a heterotetramer composed of two Mre11 subunits and two Rad50 subunits. Requires Zn(2+) as cofactor.

In terms of biological role, part of the Rad50/Mre11 complex, which is involved in the early steps of DNA double-strand break (DSB) repair. The complex may facilitate opening of the processed DNA ends to aid in the recruitment of HerA and NurA. Rad50 controls the balance between DNA end bridging and DNA resection via ATP-dependent structural rearrangements of the Rad50/Mre11 complex. The sequence is that of DNA double-strand break repair Rad50 ATPase from Thermoplasma volcanium (strain ATCC 51530 / DSM 4299 / JCM 9571 / NBRC 15438 / GSS1).